Reading from the N-terminus, the 359-residue chain is Phosphoserine aminotransferase (359 aa).

Arginine 41 is an L-glutamate binding site. Pyridoxal 5'-phosphate is bound by residues 75–76 (AS), tryptophan 99, threonine 147, aspartate 166, and glutamine 189. Lysine 190 carries the post-translational modification N6-(pyridoxal phosphate)lysine. 231 to 232 (NT) serves as a coordination point for pyridoxal 5'-phosphate.

Belongs to the class-V pyridoxal-phosphate-dependent aminotransferase family. SerC subfamily. Homodimer. Pyridoxal 5'-phosphate is required as a cofactor.

The protein localises to the cytoplasm. The enzyme catalyses O-phospho-L-serine + 2-oxoglutarate = 3-phosphooxypyruvate + L-glutamate. It carries out the reaction 4-(phosphooxy)-L-threonine + 2-oxoglutarate = (R)-3-hydroxy-2-oxo-4-phosphooxybutanoate + L-glutamate. The protein operates within amino-acid biosynthesis; L-serine biosynthesis; L-serine from 3-phospho-D-glycerate: step 2/3. Its pathway is cofactor biosynthesis; pyridoxine 5'-phosphate biosynthesis; pyridoxine 5'-phosphate from D-erythrose 4-phosphate: step 3/5. Functionally, catalyzes the reversible conversion of 3-phosphohydroxypyruvate to phosphoserine and of 3-hydroxy-2-oxo-4-phosphonooxybutanoate to phosphohydroxythreonine. This is Phosphoserine aminotransferase from Azobacteroides pseudotrichonymphae genomovar. CFP2.